The following is a 591-amino-acid chain: CDK5RAP3 protein homolog (591 aa).

A compositionally biased stretch (low complexity) spans arginine 232–proline 250. Disordered regions lie at residues arginine 232–leucine 252 and threonine 269–glycine 303. Gly residues predominate over residues alanine 279–glycine 303. Short sequence motifs (shuffled ATG8-binding motif) lie at residues isoleucine 311–aspartate 314, isoleucine 334–aspartate 337, and isoleucine 369–aspartate 372. Residues asparagine 386 to leucine 401 show a composition bias toward low complexity. A disordered region spans residues asparagine 386 to aspartate 416.

Belongs to the CDK5RAP3 family. In terms of assembly, substrate adapter component of the UFM1 ribosome E3 ligase (UREL) complex. Interacts with ATG8 family proteins.

Its function is as follows. Substrate adapter of E3 ligase complexes mediating ufmylation, the covalent attachment of the ubiquitin-like modifier UFM1 to substrate proteins, and which is involved in various processes, such as ribosome recycling and reticulophagy (also called ER-phagy). The chain is CDK5RAP3 protein homolog from Chlamydomonas reinhardtii (Chlamydomonas smithii).